The primary structure comprises 122 residues: Fluoride-specific ion channel FluC (122 aa).

Helical transmembrane passes span 1–21 (MYAF…RHYL), 35–55 (WAIL…SAYL), 67–87 (FLLT…LNLI), and 98–118 (FLNL…GFWL). Positions 74 and 77 each coordinate Na(+).

This sequence belongs to the fluoride channel Fluc/FEX (TC 1.A.43) family.

The protein resides in the cell inner membrane. The enzyme catalyses fluoride(in) = fluoride(out). With respect to regulation, na(+) is not transported, but it plays an essential structural role and its presence is essential for fluoride channel function. Its function is as follows. Fluoride-specific ion channel. Important for reducing fluoride concentration in the cell, thus reducing its toxicity. The protein is Fluoride-specific ion channel FluC of Dichelobacter nodosus (strain VCS1703A).